A 342-amino-acid chain; its full sequence is Ribosomal RNA small subunit methyltransferase C (342 aa).

The protein belongs to the methyltransferase superfamily. RsmC family. In terms of assembly, monomer.

It is found in the cytoplasm. The enzyme catalyses guanosine(1207) in 16S rRNA + S-adenosyl-L-methionine = N(2)-methylguanosine(1207) in 16S rRNA + S-adenosyl-L-homocysteine + H(+). Functionally, specifically methylates the guanine in position 1207 of 16S rRNA in the 30S particle. This is Ribosomal RNA small subunit methyltransferase C from Shewanella sp. (strain MR-7).